The sequence spans 220 residues: Peptidoglycan hydrolase gp5 (220 aa).

It belongs to the peptidase U40 family. In terms of assembly, monomer.

The protein localises to the virion. In terms of biological role, muralytic enzyme exposed to host peptidoglycan layer after membrane fusion during viral entry. Functions as an exolysin that cleaves the peptide bridge formed by meso-diaminopimelic acid and D-alanine. Also lyses the host cell late in infection to release the virions. This is Peptidoglycan hydrolase gp5 (P5) from Pseudomonas savastanoi pv. phaseolicola (Pseudomonas syringae pv. phaseolicola).